The following is a 511-amino-acid chain: ESX-1 secretion system protein EccD1 (511 aa).

Ser-2 carries the N-acetylserine modification. Over 2–143 (SAPAVAAGPT…PEFDRTALNR (142 aa)) the chain is Cytoplasmic. The chain crosses the membrane as a helical span at residues 144–164 (FVGAAIPLLTAPVIGMAMRAW). The Periplasmic portion of the chain corresponds to 165–170 (WETGRS). Residues 171 to 191 (LWWPLAIGILGIAVLVGSFVA) form a helical membrane-spanning segment. The Cytoplasmic segment spans residues 192–202 (NRFYQSGHLAE). A helical membrane pass occupies residues 203–223 (CLLVTTYLLIATAAALAVPLP). Over 224 to 227 (RGVN) the chain is Periplasmic. A helical transmembrane segment spans residues 228-248 (SLGAPQVAGAATAVLFLTLMT). The Cytoplasmic segment spans residues 249–257 (RGGPRKRHE). Residues 258–278 (LASFAVITAIAVIAAAAAFGY) form a helical membrane-spanning segment. The Periplasmic segment spans residues 279–285 (GYQDWVP). Residues 286 to 306 (AGGIAFGLFIVTNAAKLTVAV) traverse the membrane as a helical segment. Residues 307–367 (ARIALPPIPV…TERSKLAKQL (61 aa)) lie on the Cytoplasmic side of the membrane. The next 2 helical transmembrane spans lie at 368 to 388 (LIGYVTSGTLILAAGAIAVVV) and 389 to 409 (RGHFFVHSLVVAGLITTVCGF). Topologically, residues 410–420 (RSRLYAERWCA) are cytoplasmic. The chain crosses the membrane as a helical span at residues 421–441 (WALLAATVAIPTGLTAKLIIW). The Periplasmic segment spans residues 442–444 (YPH). The chain crosses the membrane as a helical span at residues 445 to 465 (YAWLLLSVYLTVALVALVVVG). At 466–482 (SMAHVRRVSPVVKRTLE) the chain is on the cytoplasmic side. A helical transmembrane segment spans residues 483–503 (LIDGAMIAAIIPMLLWITGVY). Residues 504-511 (DTVRNIRF) are Periplasmic-facing.

This sequence belongs to the EccD/Snm4 family. As to quaternary structure, possibly a homodimer. Part of the ESX-1 / type VII secretion system (T7SS), which is composed of cytosolic and membrane components. The ESX-1 membrane complex is composed of EccB1, EccCa1, EccCb1, EccD1 and EccE1.

The protein localises to the cell inner membrane. In terms of biological role, part of the ESX-1 specialized secretion system, which delivers several virulence factors to host cells during infection, including the key virulence factors EsxA (ESAT-6) and EsxB (CFP-10). The protein is ESX-1 secretion system protein EccD1 of Mycobacterium tuberculosis (strain ATCC 25618 / H37Rv).